The chain runs to 242 residues: 2-C-methyl-D-erythritol 4-phosphate cytidylyltransferase (242 aa).

Belongs to the IspD/TarI cytidylyltransferase family. IspD subfamily.

It catalyses the reaction 2-C-methyl-D-erythritol 4-phosphate + CTP + H(+) = 4-CDP-2-C-methyl-D-erythritol + diphosphate. The protein operates within isoprenoid biosynthesis; isopentenyl diphosphate biosynthesis via DXP pathway; isopentenyl diphosphate from 1-deoxy-D-xylulose 5-phosphate: step 2/6. Its function is as follows. Catalyzes the formation of 4-diphosphocytidyl-2-C-methyl-D-erythritol from CTP and 2-C-methyl-D-erythritol 4-phosphate (MEP). This is 2-C-methyl-D-erythritol 4-phosphate cytidylyltransferase from Vesicomyosocius okutanii subsp. Calyptogena okutanii (strain HA).